The chain runs to 417 residues: D-amino acid dehydrogenase (417 aa).

3 to 17 (VIVLGSGVIGVTAAW) serves as a coordination point for FAD.

It belongs to the DadA oxidoreductase family. Requires FAD as cofactor.

It carries out the reaction a D-alpha-amino acid + A + H2O = a 2-oxocarboxylate + AH2 + NH4(+). It participates in amino-acid degradation; D-alanine degradation; NH(3) and pyruvate from D-alanine: step 1/1. Functionally, oxidative deamination of D-amino acids. The sequence is that of D-amino acid dehydrogenase from Methylobacillus flagellatus (strain ATCC 51484 / DSM 6875 / VKM B-1610 / KT).